The sequence spans 348 residues: Holliday junction branch migration complex subunit RuvB (348 aa).

Residues 1 to 183 (MTEASRIVAP…FGIPVRLNFY (183 aa)) are large ATPase domain (RuvB-L). Residues Leu-22, Arg-23, Gly-64, Lys-67, Thr-68, Thr-69, 130–132 (EDF), Arg-173, Tyr-183, and Arg-220 each bind ATP. Thr-68 provides a ligand contact to Mg(2+). The tract at residues 184–254 (TEDELEKIVS…VADHALGALE (71 aa)) is small ATPAse domain (RuvB-S). The head domain (RuvB-H) stretch occupies residues 257-348 (AAGLDAMDRR…SGLFGQDEDR (92 aa)). The DNA site is built by Arg-293, Arg-312, and Arg-317. The tract at residues 329–348 (LTEPSRDPAQSGLFGQDEDR) is disordered.

This sequence belongs to the RuvB family. Homohexamer. Forms an RuvA(8)-RuvB(12)-Holliday junction (HJ) complex. HJ DNA is sandwiched between 2 RuvA tetramers; dsDNA enters through RuvA and exits via RuvB. An RuvB hexamer assembles on each DNA strand where it exits the tetramer. Each RuvB hexamer is contacted by two RuvA subunits (via domain III) on 2 adjacent RuvB subunits; this complex drives branch migration. In the full resolvosome a probable DNA-RuvA(4)-RuvB(12)-RuvC(2) complex forms which resolves the HJ.

It localises to the cytoplasm. It catalyses the reaction ATP + H2O = ADP + phosphate + H(+). Functionally, the RuvA-RuvB-RuvC complex processes Holliday junction (HJ) DNA during genetic recombination and DNA repair, while the RuvA-RuvB complex plays an important role in the rescue of blocked DNA replication forks via replication fork reversal (RFR). RuvA specifically binds to HJ cruciform DNA, conferring on it an open structure. The RuvB hexamer acts as an ATP-dependent pump, pulling dsDNA into and through the RuvAB complex. RuvB forms 2 homohexamers on either side of HJ DNA bound by 1 or 2 RuvA tetramers; 4 subunits per hexamer contact DNA at a time. Coordinated motions by a converter formed by DNA-disengaged RuvB subunits stimulates ATP hydrolysis and nucleotide exchange. Immobilization of the converter enables RuvB to convert the ATP-contained energy into a lever motion, pulling 2 nucleotides of DNA out of the RuvA tetramer per ATP hydrolyzed, thus driving DNA branch migration. The RuvB motors rotate together with the DNA substrate, which together with the progressing nucleotide cycle form the mechanistic basis for DNA recombination by continuous HJ branch migration. Branch migration allows RuvC to scan DNA until it finds its consensus sequence, where it cleaves and resolves cruciform DNA. The chain is Holliday junction branch migration complex subunit RuvB from Nitrobacter winogradskyi (strain ATCC 25391 / DSM 10237 / CIP 104748 / NCIMB 11846 / Nb-255).